We begin with the raw amino-acid sequence, 176 residues long: ATP synthase subunit delta (176 aa).

The protein belongs to the ATPase delta chain family. F-type ATPases have 2 components, F(1) - the catalytic core - and F(0) - the membrane proton channel. F(1) has five subunits: alpha(3), beta(3), gamma(1), delta(1), epsilon(1). F(0) has three main subunits: a(1), b(2) and c(10-14). The alpha and beta chains form an alternating ring which encloses part of the gamma chain. F(1) is attached to F(0) by a central stalk formed by the gamma and epsilon chains, while a peripheral stalk is formed by the delta and b chains.

It localises to the cell inner membrane. Its function is as follows. F(1)F(0) ATP synthase produces ATP from ADP in the presence of a proton or sodium gradient. F-type ATPases consist of two structural domains, F(1) containing the extramembraneous catalytic core and F(0) containing the membrane proton channel, linked together by a central stalk and a peripheral stalk. During catalysis, ATP synthesis in the catalytic domain of F(1) is coupled via a rotary mechanism of the central stalk subunits to proton translocation. This protein is part of the stalk that links CF(0) to CF(1). It either transmits conformational changes from CF(0) to CF(1) or is implicated in proton conduction. The protein is ATP synthase subunit delta of Campylobacter hominis (strain ATCC BAA-381 / DSM 21671 / CCUG 45161 / LMG 19568 / NCTC 13146 / CH001A).